A 407-amino-acid chain; its full sequence is Endo-1,4-beta-xylanase D (407 aa).

The N-terminal stretch at 1-19 (MTLVKSILLALAAGHVAQA) is a signal peptide. The GH10 domain occupies 20–333 (QLNTAAKAAG…KPAYYGILAG (314 aa)). N118 carries an N-linked (GlcNAc...) asparagine glycan. Catalysis depends on E148, which acts as the Proton donor. The Nucleophile role is filled by E255. C283 and C289 are oxidised to a cystine. The tract at residues 337-364 (GSGSSSSTSSTTLITTTTPTASSSTTSA) is disordered. The CBM1 domain maps to 371-407 (SGAAHWGQCGGIGWSGPTICVSPYTCQVLNPYYSQCL).

Belongs to the glycosyl hydrolase 10 (cellulase F) family.

It is found in the secreted. The enzyme catalyses Endohydrolysis of (1-&gt;4)-beta-D-xylosidic linkages in xylans.. The protein operates within glycan degradation; xylan degradation. With respect to regulation, inhibited by wheat xylanase inhibiting protein I (XIP-I). Endo-1,4-beta-xylanase involved in the hydrolysis of xylan, a major structural heterogeneous polysaccharide found in plant biomass representing the second most abundant polysaccharide in the biosphere, after cellulose. Shows an endo-mode of action on xylan forming mainly xylobiose and short-chain xylooligosaccharides (XOS). In Talaromyces funiculosus (Fruitlet core rot fungus), this protein is Endo-1,4-beta-xylanase D (xynD).